Consider the following 492-residue polypeptide: DEAD-box ATP-dependent RNA helicase RhpA (492 aa).

The Q motif signature appears at 20–48 (PSFNDLGLKESVLKSVYEAGFTSPSPIQE). Positions 51–220 (IPAVLQGRDV…DKILENPIKI (170 aa)) constitute a Helicase ATP-binding domain. An ATP-binding site is contributed by 64–71 (AQTGTGKT). Positions 168–171 (DESD) match the DEAD box motif. The Helicase C-terminal domain maps to 231 to 393 (DITQRFYVIN…EIPTINENQI (163 aa)). A disordered region spans residues 445 to 492 (AIQNPKEKTPKPSNKKTPQHERARSFKKGQHRDRHPKTNHYSKKPKRR). Positions 469-492 (SFKKGQHRDRHPKTNHYSKKPKRR) are enriched in basic residues.

The protein belongs to the DEAD box helicase family. Homodimer. Interacts with RNase J (rnj), might be a member of a minimal RNA degradosome complex.

It localises to the cytoplasm. The catalysed reaction is ATP + H2O = ADP + phosphate + H(+). Its function is as follows. DEAD-box RNA helicase probably involved in RNA degradation. Unwinds dsRNA in both 5'- and 3'-directions. This is DEAD-box ATP-dependent RNA helicase RhpA (rhpA) from Helicobacter pylori (strain ATCC 700392 / 26695) (Campylobacter pylori).